Consider the following 1035-residue polypeptide: Kinesin-like protein KIN-4A (1035 aa).

Residues 10–369 form the Kinesin motor domain; it reads CVKVAVHVRP…LKYANRARNI (360 aa). An ATP-binding site is contributed by 89–96; sequence GQTGSGKT. Coiled coils occupy residues 380–437 and 498–702; these read VADE…LRNH and MLQD…RKSS. Disordered regions lie at residues 697-720, 766-787, and 882-928; these read EARKSSGRDNSGMNGTSPGSHMTE, VMSGAASPPRGKNGNSRANTLS, and HSES…PLSP. Composition is skewed to polar residues over residues 704–716 and 778–787; these read RDNSGMNGTSPGS and NGNSRANTLS. Residues 850 to 904 adopt a coiled-coil conformation; it reads NVAADARCQVREKEMEIKEMKEQMTELVTILRHSESRRRETEKQLKQREQAAVTA. Residues 882–898 show a composition bias toward basic and acidic residues; the sequence is HSESRRRETEKQLKQRE. Residues 902 to 926 are compositionally biased toward polar residues; the sequence is VTATTSPGNGNGSVKHSADDSNTPL. The short motif at 971 to 987 is the Nuclear localization signal element; it reads KKVSIAGQSGKLWRWKR. Residues 1014 to 1035 form a disordered region; it reads DETMTRTRPRPQLLPHRPQRVM.

It belongs to the TRAFAC class myosin-kinesin ATPase superfamily. Kinesin family. KIN-4 subfamily. As to quaternary structure, homodimer. Expressed in young tissues with cell divisions, including initiating adventitious roots, primary root tips, flower primordia, intercalary meristems, sub-epidermal regions of young culms and panicles.

The protein localises to the nucleus. It localises to the cytoplasm. Its subcellular location is the cytoskeleton. Its activity is regulated as follows. May be regulated by cyclin-dependent kinase A. Microtubule-dependent motor protein involved in the control of the oriented deposition of cellulose microfibrils. Involved in wall biogenesis and modification, and contributes to cell-cycle progression and cell division. Acts as a transcriptional activator in gibberellic acid (GA) biosynthesis pathway. Binds specifically to the DNA sequence 5'-ACCAACTTGAA-3' of the ent-kaurene oxidase 2 (CYP701A6 or OsKO2) promoter. May regulate CYP701A6 gene expression and mediates cell elongation by regulating the GA biosynthesis pathway. The protein is Kinesin-like protein KIN-4A of Oryza sativa subsp. japonica (Rice).